A 108-amino-acid polypeptide reads, in one-letter code: Parvalbumin beta (108 aa).

2 consecutive EF-hand domains span residues 38-73 (KPTD…FCSS) and 77-108 (LSNA…LVRS). Ca(2+)-binding residues include Asp51, Asp53, Ser55, Tyr57, Glu59, Glu62, Asp90, Asp92, Asp94, Lys96, and Glu101.

This sequence belongs to the parvalbumin family.

In muscle, parvalbumin is thought to be involved in relaxation after contraction. It binds two calcium ions. This Amphiuma means (Salamander) protein is Parvalbumin beta.